Here is a 117-residue protein sequence, read N- to C-terminus: Ribosome-binding factor A (117 aa).

It belongs to the RbfA family. As to quaternary structure, monomer. Binds 30S ribosomal subunits, but not 50S ribosomal subunits or 70S ribosomes.

Its subcellular location is the cytoplasm. Its function is as follows. One of several proteins that assist in the late maturation steps of the functional core of the 30S ribosomal subunit. Associates with free 30S ribosomal subunits (but not with 30S subunits that are part of 70S ribosomes or polysomes). Required for efficient processing of 16S rRNA. May interact with the 5'-terminal helix region of 16S rRNA. The protein is Ribosome-binding factor A of Bacillus subtilis (strain 168).